The primary structure comprises 355 residues: RNA 3'-terminal phosphate cyclase (355 aa).

Residues Q100 and 300 to 304 (HLADQ) each bind ATP. The Tele-AMP-histidine intermediate role is filled by H325.

Belongs to the RNA 3'-terminal cyclase family. Type 1 subfamily.

The protein resides in the cytoplasm. It catalyses the reaction a 3'-end 3'-phospho-ribonucleotide-RNA + ATP = a 3'-end 2',3'-cyclophospho-ribonucleotide-RNA + AMP + diphosphate. Catalyzes the conversion of 3'-phosphate to a 2',3'-cyclic phosphodiester at the end of RNA. The mechanism of action of the enzyme occurs in 3 steps: (A) adenylation of the enzyme by ATP; (B) transfer of adenylate to an RNA-N3'P to produce RNA-N3'PP5'A; (C) and attack of the adjacent 2'-hydroxyl on the 3'-phosphorus in the diester linkage to produce the cyclic end product. The biological role of this enzyme is unknown but it is likely to function in some aspects of cellular RNA processing. The sequence is that of RNA 3'-terminal phosphate cyclase from Methanosarcina acetivorans (strain ATCC 35395 / DSM 2834 / JCM 12185 / C2A).